The primary structure comprises 304 residues: Glycine--tRNA ligase alpha subunit (304 aa).

Belongs to the class-II aminoacyl-tRNA synthetase family. As to quaternary structure, tetramer of two alpha and two beta subunits.

Its subcellular location is the cytoplasm. It carries out the reaction tRNA(Gly) + glycine + ATP = glycyl-tRNA(Gly) + AMP + diphosphate. This Photorhabdus laumondii subsp. laumondii (strain DSM 15139 / CIP 105565 / TT01) (Photorhabdus luminescens subsp. laumondii) protein is Glycine--tRNA ligase alpha subunit.